The primary structure comprises 185 residues: Elongation factor P (185 aa).

The protein belongs to the elongation factor P family.

It is found in the cytoplasm. It participates in protein biosynthesis; polypeptide chain elongation. Functionally, involved in peptide bond synthesis. Stimulates efficient translation and peptide-bond synthesis on native or reconstituted 70S ribosomes in vitro. Probably functions indirectly by altering the affinity of the ribosome for aminoacyl-tRNA, thus increasing their reactivity as acceptors for peptidyl transferase. The chain is Elongation factor P from Dictyoglomus thermophilum (strain ATCC 35947 / DSM 3960 / H-6-12).